The primary structure comprises 905 residues: Lateral signaling target protein 2 homolog (905 aa).

Lys87 is covalently cross-linked (Glycyl lysine isopeptide (Lys-Gly) (interchain with G-Cter in ubiquitin)). Ser334 is subject to Phosphoserine. Positions 354–441 (DEMSSLLSPP…RGQDGQSGEV (88 aa)) are disordered. Polar residues-rich tracts occupy residues 358-367 (SLLSPPSACQ) and 418-437 (PGNTFELTQGNAQQRGQDGQ). The residue at position 512 (Thr512) is a Phosphothreonine. Disordered stretches follow at residues 516–552 (NPKSPTSQDSAVAAQEAPGHGTSPLEPRAEGTGDNSH) and 589–691 (PGSV…RGDV). Composition is skewed to basic and acidic residues over residues 542–552 (PRAEGTGDNSH) and 605–615 (GGDKEPERIDE). Polar residues predominate over residues 647-656 (SGPQVDTASR). Basic and acidic residues predominate over residues 659 to 678 (GEGEVKGQPEPEARKQDPEK). The FYVE-type zinc finger occupies 835 to 895 (DEACGFCTSC…VCTHCYMFHV (61 aa)). Residues Cys841, Cys844, Cys857, Cys860, Cys865, Cys868, and Cys887 each coordinate Zn(2+). Phosphothreonine; by MAP2K is present on Thr888. Position 890 (Cys890) interacts with Zn(2+).

This sequence belongs to the lst-2 family. In terms of assembly, interacts with TRIM3. Post-translationally, monoubiquitination at Lys-87 prevents binding to phosphatidylinositol 3-phosphate (PI3P) and localization to early endosome membranes. As to expression, enriched in brain (at protein level).

It is found in the cytoplasm. The protein localises to the cytosol. It localises to the early endosome membrane. In terms of biological role, negative regulator of epidermal growth factor receptor (EGFR) signaling. Acts by promoting EGFR degradation in endosomes when not monoubiquitinated. This is Lateral signaling target protein 2 homolog (Zfyve28) from Mus musculus (Mouse).